The primary structure comprises 231 residues: Large ribosomal subunit protein uL1 (231 aa).

The protein belongs to the universal ribosomal protein uL1 family. As to quaternary structure, part of the 50S ribosomal subunit.

Its function is as follows. Binds directly to 23S rRNA. The L1 stalk is quite mobile in the ribosome, and is involved in E site tRNA release. In terms of biological role, protein L1 is also a translational repressor protein, it controls the translation of the L11 operon by binding to its mRNA. The protein is Large ribosomal subunit protein uL1 of Francisella tularensis subsp. tularensis (strain FSC 198).